The following is a 619-amino-acid chain: CLPTM1-like membrane protein cnrB (619 aa).

The interval 1–21 (MNNQGGAVAANGQRPQAQQQQ) is disordered. Over residues 9-21 (AANGQRPQAQQQQ) the composition is skewed to low complexity. 6 helical membrane passes run 26–46 (IMGI…ASFA), 324–344 (WILG…FLAF), 360–380 (LSVK…LYLL), 384–404 (TSYM…WKLG), 445–465 (YLSW…LYYH), and 474–496 (VVSS…QLFI). The disordered stretch occupies residues 566-619 (SEEAEEVQQQDKKEIKEKVEEREEEKQEEEEEEKEKEEESTSSSKVTKRKTKKV). The span at 574-590 (QQDKKEIKEKVEEREEE) shows a compositional bias: basic and acidic residues. A compositionally biased stretch (acidic residues) spans 591–605 (KQEEEEEEKEKEEES).

The protein belongs to the CLPTM1 family.

The protein resides in the membrane. The chain is CLPTM1-like membrane protein cnrB (cnrB) from Dictyostelium discoideum (Social amoeba).